The primary structure comprises 298 residues: tRNA(Met) cytidine acetate ligase (298 aa).

ATP contacts are provided by residues 6–19 (IAEYNPFHNGHIYQ), glycine 100, asparagine 157, and arginine 182.

This sequence belongs to the TmcAL family.

It is found in the cytoplasm. The enzyme catalyses cytidine(34) in elongator tRNA(Met) + acetate + ATP = N(4)-acetylcytidine(34) in elongator tRNA(Met) + AMP + diphosphate. Catalyzes the formation of N(4)-acetylcytidine (ac(4)C) at the wobble position of elongator tRNA(Met), using acetate and ATP as substrates. First activates an acetate ion to form acetyladenylate (Ac-AMP) and then transfers the acetyl group to tRNA to form ac(4)C34. The polypeptide is tRNA(Met) cytidine acetate ligase (Mycoplasmopsis pulmonis (strain UAB CTIP) (Mycoplasma pulmonis)).